A 313-amino-acid chain; its full sequence is Olfactory receptor 6E1 (313 aa).

Residue N3 is glycosylated (N-linked (GlcNAc...) asparagine). 7 consecutive transmembrane segments (helical) span residues 25-45, 64-84, 96-116, 142-162, 192-212, 238-258, and 271-291; these read IFLG…LIIF, FAML…TNII, FLQA…LAVM, LVFC…SIVF, LVEF…LAVT, TCSS…FMYV, and KVVA…IYTL. C95 and C177 are joined by a disulfide.

Belongs to the G-protein coupled receptor 1 family.

It localises to the cell membrane. In terms of biological role, odorant receptor. Activated by (-)-citronellal and to a lesser extent by (+)-citronellal. Not activated by carvone or limonene. This Mus musculus (Mouse) protein is Olfactory receptor 6E1.